Here is a 181-residue protein sequence, read N- to C-terminus: Crustacyanin-A1 subunit (181 aa).

3 disulfide bridges follow: Cys-12/Cys-121, Cys-51/Cys-173, and Cys-117/Cys-150.

It belongs to the calycin superfamily. Lipocalin family. In terms of assembly, oligomer; Can form dimers (beta-crustacyanin); or complexes of 16 subunits (alpha-crustacyanin). There are five types of subunits: A1, A2, A3, C1 and C2. As to expression, found in the carapace.

The protein resides in the secreted. It is found in the extracellular space. Its function is as follows. Binds the carotenoid astaxanthin (AXT) which provides the blue coloration to the carapace of the lobster. The protein is Crustacyanin-A1 subunit of Homarus gammarus (European lobster).